The following is a 1643-amino-acid chain: Lysine-specific demethylase 6B (1643 aa).

Disordered stretches follow at residues Gly-52–Gly-88, Ala-190–Asp-680, Glu-704–Leu-807, and Gly-822–Ser-1096. 2 stretches are compositionally biased toward low complexity: residues Ser-63–Pro-74 and Ala-212–Leu-223. Ser-224 carries the phosphoserine modification. Pro residues predominate over residues Pro-242 to Pro-266. Residues Gly-291–His-307 are compositionally biased toward basic and acidic residues. The span at Ala-332–Pro-342 shows a compositional bias: pro residues. A compositionally biased stretch (basic and acidic residues) spans Asp-359–Met-370. Over residues Pro-394–Gly-412 the composition is skewed to low complexity. The span at Ser-460–Ala-484 shows a compositional bias: pro residues. The segment covering Thr-550–Val-569 has biased composition (low complexity). Pro residues-rich tracts occupy residues Leu-584–Val-600 and Gly-641–Pro-658. Residues Glu-704–Gln-714 are compositionally biased toward basic and acidic residues. The segment covering Thr-740–Thr-764 has biased composition (low complexity). A compositionally biased stretch (pro residues) spans Pro-772–Pro-800. A compositionally biased stretch (low complexity) spans Ser-843–Pro-877. A compositionally biased stretch (pro residues) spans Val-889–Leu-904. The segment covering Glu-916–Gly-929 has biased composition (basic and acidic residues). The span at Cys-972 to Ala-989 shows a compositional bias: basic residues. Residues Cys-990 to Ala-1003 show a composition bias toward basic and acidic residues. A compositionally biased stretch (basic residues) spans Lys-1004–Arg-1016. The span at Pro-1047 to Ala-1067 shows a compositional bias: pro residues. Lys-1109 participates in a covalent cross-link: Glycyl lysine isopeptide (Lys-Gly) (interchain with G-Cter in SUMO2). The segment at Phe-1288 to Ile-1325 is disordered. Acidic residues predominate over residues Lys-1296–Asp-1307. The 164-residue stretch at Arg-1339–Trp-1502 folds into the JmjC domain. Positions 1390, 1392, and 1470 each coordinate Fe cation. Residues Cys-1575, Cys-1578, Cys-1602, and Cys-1605 each coordinate Zn(2+).

The protein belongs to the UTX family. In terms of assembly, interacts with TLE1. Component of the MLL4 complex, at least composed of KMT2B/MLL4, ASH2L, RBBP5, WDR5, and KDM6B. Interacts with TBX21, SMARCA4, SMARCC1 and SMARCC2. The cofactor is L-ascorbate. Fe(2+) serves as cofactor.

It is found in the nucleus. It catalyses the reaction N(6),N(6),N(6)-trimethyl-L-lysyl(27)-[histone H3] + 2 2-oxoglutarate + 2 O2 = N(6)-methyl-L-lysyl(27)-[histone H3] + 2 formaldehyde + 2 succinate + 2 CO2. Histone demethylase that specifically demethylates 'Lys-27' of histone H3, thereby playing a central role in histone code. Demethylates trimethylated and dimethylated H3 'Lys-27'. Plays a central role in regulation of posterior development, by regulating HOX gene expression. Involved in inflammatory response by participating in macrophage differentiation in case of inflammation by regulating gene expression and macrophage differentiation. Plays a demethylase-independent role in chromatin remodeling to regulate T-box family member-dependent gene expression by acting as a link between T-box factors and the SMARCA4-containing SWI/SNF remodeling complex. In Homo sapiens (Human), this protein is Lysine-specific demethylase 6B (KDM6B).